Reading from the N-terminus, the 266-residue chain is Small ribosomal subunit protein uS2 (266 aa).

The segment at 238 to 266 (EFASAPDAGKKGRQAQPKKGKRASDAAAE) is disordered. Residues 248–258 (KGRQAQPKKGK) show a composition bias toward basic residues.

It belongs to the universal ribosomal protein uS2 family.

This is Small ribosomal subunit protein uS2 from Xylella fastidiosa (strain M12).